We begin with the raw amino-acid sequence, 494 residues long: Cytochrome P450 2A5 (494 aa).

A Phosphoserine modification is found at S131. The residue at position 379 (K379) is an N6-acetyllysine. Residue C439 participates in heme binding.

Belongs to the cytochrome P450 family. Heme serves as cofactor. As to expression, liver, with a strong circadian rhythmicity. Circadian expression is regulated by DBP.

It localises to the endoplasmic reticulum membrane. The protein resides in the microsome membrane. The catalysed reaction is an organic molecule + reduced [NADPH--hemoprotein reductase] + O2 = an alcohol + oxidized [NADPH--hemoprotein reductase] + H2O + H(+). Functionally, exhibits a high coumarin 7-hydroxylase activity. The protein is Cytochrome P450 2A5 (Cyp2a5) of Mus musculus (Mouse).